A 433-amino-acid chain; its full sequence is Adenylosuccinate synthetase (433 aa).

GTP-binding positions include 11–17 and 39–41; these read GDEGKGK and GHT. Catalysis depends on Asp-12, which acts as the Proton acceptor. 2 residues coordinate Mg(2+): Asp-12 and Gly-39. Residues 12 to 15, 37 to 40, Thr-134, Arg-148, Asn-230, Thr-245, and Arg-309 each bind IMP; these read DEGK and NAGH. Residue His-40 is the Proton donor of the active site. 305-311 contributes to the substrate binding site; sequence VTTGRKR. Residues Arg-311, 337 to 339, and 419 to 421 contribute to the GTP site; these read KLD and GTG.

This sequence belongs to the adenylosuccinate synthetase family. In terms of assembly, homodimer. The cofactor is Mg(2+).

Its subcellular location is the cytoplasm. The enzyme catalyses IMP + L-aspartate + GTP = N(6)-(1,2-dicarboxyethyl)-AMP + GDP + phosphate + 2 H(+). It participates in purine metabolism; AMP biosynthesis via de novo pathway; AMP from IMP: step 1/2. Functionally, plays an important role in the de novo pathway and in the salvage pathway of purine nucleotide biosynthesis. Catalyzes the first committed step in the biosynthesis of AMP from IMP. The protein is Adenylosuccinate synthetase of Saccharomyces cerevisiae (strain AWRI1631) (Baker's yeast).